Reading from the N-terminus, the 248-residue chain is Cell division protein ZapD (248 aa).

It belongs to the ZapD family. In terms of assembly, interacts with FtsZ.

It is found in the cytoplasm. Cell division factor that enhances FtsZ-ring assembly. Directly interacts with FtsZ and promotes bundling of FtsZ protofilaments, with a reduction in FtsZ GTPase activity. This Aliivibrio fischeri (strain ATCC 700601 / ES114) (Vibrio fischeri) protein is Cell division protein ZapD.